The following is an 820-amino-acid chain: Phenylalanine--tRNA ligase beta subunit (820 aa).

One can recognise a tRNA-binding domain in the interval 42 to 154 (KGGLEGLVIG…EDAVPGTLAK (113 aa)). Positions 413–489 (AQDFIVELTY…RIYGYNNVEI (77 aa)) constitute a B5 domain. The Mg(2+) site is built by Asp467, Asp473, Glu476, and Asp477. The region spanning 727-820 (SKFPAVKRDL…LEDKLGAKLR (94 aa)) is the FDX-ACB domain.

The protein belongs to the phenylalanyl-tRNA synthetase beta subunit family. Type 1 subfamily. In terms of assembly, tetramer of two alpha and two beta subunits. Mg(2+) serves as cofactor.

The protein localises to the cytoplasm. It carries out the reaction tRNA(Phe) + L-phenylalanine + ATP = L-phenylalanyl-tRNA(Phe) + AMP + diphosphate + H(+). The protein is Phenylalanine--tRNA ligase beta subunit of Bacteroides fragilis (strain ATCC 25285 / DSM 2151 / CCUG 4856 / JCM 11019 / LMG 10263 / NCTC 9343 / Onslow / VPI 2553 / EN-2).